Reading from the N-terminus, the 197-residue chain is Guanylate kinase (197 aa).

A Guanylate kinase-like domain is found at 7–185 (GLIIILSSPS…TLKKIHEIIV (179 aa)). 14–21 (SPSGTGKS) contributes to the ATP binding site.

The protein belongs to the guanylate kinase family.

It localises to the cytoplasm. The enzyme catalyses GMP + ATP = GDP + ADP. Essential for recycling GMP and indirectly, cGMP. In Rickettsia prowazekii (strain Madrid E), this protein is Guanylate kinase (gmk).